The chain runs to 217 residues: Growth factor receptor-bound protein 2 (217 aa).

Position 1 is an N-acetylmethionine (Met-1). Residues 1–58 (MEAIAKYDFKATADDELSFKRGDILKVLNEECDQNWYKAELNGKDGFIPKNYIEMKPH) form the SH3 1 domain. Lys-6, Lys-50, and Lys-109 each carry N6-acetyllysine. The 93-residue stretch at 60 to 152 (WFFGKIPRAK…NQQIFLRDIE (93 aa)) folds into the SH2 domain. A Glycyl lysine isopeptide (Lys-Gly) (interchain with G-Cter in ubiquitin) cross-link involves residue Lys-109. Residues 156–215 (QQPTYVQALFDFDPQEDGELGFRRGDFIHVMDNSDPNWWKGACHGQTGMFPRNYVTPVNR) form the SH3 2 domain. Tyr-209 is subject to Phosphotyrosine. Thr-211 bears the Phosphothreonine mark.

The protein belongs to the GRB2/sem-5/DRK family. As to quaternary structure, associates (via SH2 domain) with activated EGF and PDGF receptors (tyrosine phosphorylated). Interacts with PDGFRA (tyrosine phosphorylated); the interaction may be indirect. Interacts with IRS4 (when Tyr-phosphorylated). Also associates to other cellular Tyr-phosphorylated proteins such as SIT1, IRS1, IRS2, SHC and LNK; probably via the concerted action of both its SH2 and SH3 domains. It also seems to interact with RAS in the signaling pathway leading to DNA synthesis. Interacts with SOS1. Forms a complex with MUC1 and SOS1, through interaction of the SH3 domains with SOS1 and the SH2 domain with phosphorylated MUC1. Interacts with phosphorylated MET. Interacts with phosphorylated TOM1L1. Interacts with the phosphorylated C-terminus of SH2B2. Interacts with phosphorylated SIT1, LAX1, LAT, LAT2 and LIME1 upon TCR and/or BCR activation. Interacts with NISCH, PTPNS1 and REPS2. Interacts with syntrophin SNTA1. Interacts (via SH3 domains) with REPS1. Interacts (via SH3 domains) with PIK3C2B. Interacts with CBL and CBLB. Interacts with AJUBA and CLNK. Interacts (via SH2 domain) with TEK/TIE2 (tyrosine phosphorylated). Interacts with SHB, INPP5D/SHIP1, SKAP1 and SKAP2. Interacts with PTPN11. Interacts with PRNP. Interacts with RALGPS1. Also interacts with HCST. Interacts with KDR. Interacts with FLT1 (tyrosine-phosphorylated). Interacts with GAPT and PTPRE. Interacts (via SH2 domain) with KIF26A. Interacts (via SH3 2) with GAB2. Interacts with ADAM15. Interacts with THEMIS2. Interacts (via SH2 domain) with AXL (phosphorylated). Interacts (via SH2 domain) with KIT (phosphorylated). Interacts with PTPRJ and BCR. Interacts with PTPN23. Interacts with FLT4 (tyrosine phosphorylated). Interacts with EPHB1 and SHC1; activates the MAPK/ERK cascade to regulate cell migration. Part of a complex including TNK2, GRB2 and one receptor tyrosine kinase (RTK) such as AXL and PDGFRL, in which GRB2 promotes RTK recruitment by TNK2. Interacts (via SH2 domain) with CSF1R (tyrosine phosphorylated). Interacts with ERBB4. Interacts with NTRK1 (phosphorylated upon ligand-binding). Interacts with PTK2/FAK1 (tyrosine phosphorylated). Interacts with PTK2B/PYK2 (tyrosine phosphorylated). Interacts (via SH2-domain) with SCIMP; this interaction is dependent on phosphorylation of SCIMP 'Tyr-58'. Interacts (via SH3 domains) with GAREM1 (via proline-rich domain and tyrosine phosphorylated); the interaction occurs upon EGF stimulation. Interacts with DAB2. Interacts with TESPA1. Interacts with THEMIS. Interacts with PLCG1, LAT and THEMIS upon TCR activation in thymocytes; the association is weaker in the absence of TESPA1. Interacts with CD28. Interacts with RAB13; may recruit RAB13 to the leading edge of migrating endothelial cells where it can activate RHOA. Interacts with ASAP3 (phosphorylated form). Interacts (via SH2 domain) with PTPRH (phosphorylated form). Interacts with PTPRO (phosphorylated form). Interacts with PTPRB (phosphorylated form). Interacts (via SH3 domain 2) with PRR14 (via proline-rich region). Interacts with DENND2B. Interacts with SPRY2. Interacts with LRRC8A. Interacts with PEAK1. Interacts with FCRL1. Interacts with PCNA. Interacts with CD19. Interacts with BECN1. Interacts with RAD51; the interaction inhibits RAD51 ATPase to stabilize RAD51-DNA complex at stalled replication forks. Interacts with MRE11; this interaction recruits MRE11 to the DNA damage sites. Interacts with RIPK1 ans SQSTM1; these interactions play a critical role in regulating programmed necrosis. Interacts with AGO2; this interaction is important for the formation of a ternary complex containing GRB2, AGO2 and DICER1. Interacts with TIGIT; this interaction inhibits PI3K and MAPK signaling cascades. Interacts with CD226; this interaction leads to activation of VAV1, PI3K and PLCG1. Interacts with SOS1; this interaction competes with GRB2 to bind SOS1 via its N-terminal SH3 domain. Phosphorylation of Tyr-209 in the C-terminal SH3 domain reduces its binding to SOS1. Post-translationally, ubiquitinated by RNF173, leading to proteasomal degradation and inhibition of the RAF/MEK/ERK pathway. In the nucleus, polyubiquitinated by RBBP6 at Lys-109 at DNA damage sites. In terms of tissue distribution, expressed in macrophages.

It is found in the nucleus. The protein resides in the cytoplasm. It localises to the endosome. Its subcellular location is the golgi apparatus. Functionally, non-enzymatic adapter protein that plays a pivotal role in precisely regulated signaling cascades from cell surface receptors to cellular responses, including signaling transduction and gene expression. Thus, participates in many biological processes including regulation of innate and adaptive immunity, autophagy, DNA repair or necroptosis. Controls signaling complexes at the T-cell antigen receptor to facilitate the activation, differentiation, and function of T-cells. Mechanistically, engagement of the TCR leads to phosphorylation of the adapter protein LAT, which serves as docking site for GRB2. In turn, GRB2 establishes a a connection with SOS1 that acts as a guanine nucleotide exchange factor and serves as a critical regulator of KRAS/RAF1 leading to MAPKs translocation to the nucleus and activation. Also functions a role in B-cell activation by amplifying Ca(2+) mobilization and activation of the ERK MAP kinase pathway upon recruitment to the phosphorylated B-cell antigen receptor (BCR). Plays a role in switching between autophagy and programmed necrosis upstream of EGFR by interacting with components of necrosomes including RIPK1 and with autophagy regulators SQSTM1 and BECN1. Regulates miRNA biogenesis by forming a functional ternary complex with AGO2 and DICER1. Functions in the replication stress response by protecting DNA at stalled replication forks from MRE11-mediated degradation. Mechanistically, inhibits RAD51 ATPase activity to stabilize RAD51 on stalled replication forks. Additionally, directly recruits and later releases MRE11 at DNA damage sites during the homology-directed repair (HDR) process. Its function is as follows. Does not bind to phosphorylated epidermal growth factor receptor (EGFR) but inhibits EGF-induced transactivation of a RAS-responsive element. Acts as a dominant negative protein over GRB2 and by suppressing proliferative signals, may trigger active programmed cell death. Mechanistically, inhibits RAS-ERK signaling and downstream cell proliferation by competing with GRB2 for SOS1 binding and thus by regulating SOS1 membrane recruitment. This Mus musculus (Mouse) protein is Growth factor receptor-bound protein 2 (Grb2).